We begin with the raw amino-acid sequence, 469 residues long: MASPRELTQNPLKKIWMPYSNGRPALHACQRGVCMTNCPTLIVMVGLPARGKTYISKKLTRYLNWIGVPTREFNVGQYRRDVVKTYKSFEFFLPDNEEGLKIRKQCALAALRDVRRFLSEEGGHVAVFDATNTTRERRATIFNFGEQNGYKTFFVESICVDPEVIAANIVQVKLGSPDYVNRDSDEATEDFMRRIECYENSYESLDEDLDRDLSYIKIMDVGQSYVVNRVADHIQSRIVYYLMNIHVTPRSIYLCRHGESELNLKGRIGGDPGLSPRGREFAKSLAQFISDQNIKDLKVWTSQMKRTIQTAEALGVPYEQWKVLNEIDAGVCEEMTYEEIQDNYPLEFALRDQDKYRYRYPKGESYEDLVQRLEPVIMELERQENVLVICHQAVMRCLLAYFLDKAAEQLPYLKCPLHTVLKLTPVAYGCKVESIFLNVAAVNTHRDRPQNVDISRPPEEALVTVPAHQ.

Residues 1–249 (MASPRELTQN…YYLMNIHVTP (249 aa)) are 6-phosphofructo-2-kinase. 46 to 54 (GLPARGKTY) lines the ATP pocket. Beta-D-fructose 6-phosphate is bound by residues Arg79 and Arg103. Asp129 is a catalytic residue. Positions 131 and 137 each coordinate beta-D-fructose 6-phosphate. Cys159 is an active-site residue. Residue 168-173 (NIVQVK) participates in ATP binding. Beta-D-fructose 6-phosphate-binding residues include Lys173, Arg194, and Tyr198. A fructose-2,6-bisphosphatase region spans residues 250-469 (RSIYLCRHGE…EALVTVPAHQ (220 aa)). Arg256 provides a ligand contact to beta-D-fructose 2,6-bisphosphate. The active-site Tele-phosphohistidine intermediate is the His257. 3 residues coordinate beta-D-fructose 2,6-bisphosphate: Asn263, Gly269, and Arg306. Glu326 functions as the Proton donor/acceptor in the catalytic mechanism. 6 residues coordinate beta-D-fructose 2,6-bisphosphate: Tyr337, Arg351, Lys355, Tyr366, Gln392, and Arg396. 348-351 (FALR) contributes to the ATP binding site. ATP is bound by residues 392–396 (QAVMR) and Tyr428. The residue at position 444 (Thr444) is a Phosphothreonine; by PKC.

In the C-terminal section; belongs to the phosphoglycerate mutase family. In terms of assembly, homodimer.

It catalyses the reaction beta-D-fructose 2,6-bisphosphate + H2O = beta-D-fructose 6-phosphate + phosphate. The catalysed reaction is beta-D-fructose 6-phosphate + ATP = beta-D-fructose 2,6-bisphosphate + ADP + H(+). Its activity is regulated as follows. The most important regulatory mechanism of these opposing activities is by phosphorylation and dephosphorylation of the enzyme. Synthesis and degradation of fructose 2,6-bisphosphate. The protein is 6-phosphofructo-2-kinase/fructose-2,6-bisphosphatase 4 (PFKFB4) of Homo sapiens (Human).